A 314-amino-acid chain; its full sequence is tRNA dimethylallyltransferase (314 aa).

6–13 (GPTAVGKT) is a binding site for ATP. 8 to 13 (TAVGKT) is a binding site for substrate. The interval 31–34 (DSRQ) is interaction with substrate tRNA.

Belongs to the IPP transferase family. In terms of assembly, monomer. The cofactor is Mg(2+).

The enzyme catalyses adenosine(37) in tRNA + dimethylallyl diphosphate = N(6)-dimethylallyladenosine(37) in tRNA + diphosphate. Catalyzes the transfer of a dimethylallyl group onto the adenine at position 37 in tRNAs that read codons beginning with uridine, leading to the formation of N6-(dimethylallyl)adenosine (i(6)A). This Pseudothermotoga lettingae (strain ATCC BAA-301 / DSM 14385 / NBRC 107922 / TMO) (Thermotoga lettingae) protein is tRNA dimethylallyltransferase.